The following is a 223-amino-acid chain: Ribose-5-phosphate isomerase A (223 aa).

Residues 29–32 (TGST), 82–85 (DGAD), and 95–98 (KGGG) each bind substrate. The active-site Proton acceptor is the Glu104. Residue Lys122 participates in substrate binding.

This sequence belongs to the ribose 5-phosphate isomerase family. In terms of assembly, homodimer.

The enzyme catalyses aldehydo-D-ribose 5-phosphate = D-ribulose 5-phosphate. It functions in the pathway carbohydrate degradation; pentose phosphate pathway; D-ribose 5-phosphate from D-ribulose 5-phosphate (non-oxidative stage): step 1/1. In terms of biological role, catalyzes the reversible conversion of ribose-5-phosphate to ribulose 5-phosphate. In Neisseria meningitidis serogroup C (strain 053442), this protein is Ribose-5-phosphate isomerase A.